The following is a 389-amino-acid chain: Basigin (389 aa).

The first 21 residues, 1 to 21 (MAAALLLALAFTLLSGQGACA), serve as a signal peptide directing secretion. The Extracellular portion of the chain corresponds to 22–325 (AAGFLKAPLS…ETISLRVRSR (304 aa)). An Ig-like domain is found at 37 to 120 (GGSVVLHCEA…SSDPDRNHLT (84 aa)). 3 disulfide bridges follow: Cys-44–Cys-108, Cys-157–Cys-203, and Cys-242–Cys-305. Residues 138–219 (EPGTIQTSVQ…VGRSEINVEG (82 aa)) enclose the Ig-like C2-type domain. Residues Asn-160, Asn-270, and Asn-306 are each glycosylated (N-linked (GlcNAc...) asparagine). The Ig-like V-type domain occupies 221 to 319 (PRIKVGKKSE…AQGTTRETIS (99 aa)). Residues 326 to 349 (MAALWPFLGIVAEVLVLVTIIFIY) form a helical membrane-spanning segment. Topologically, residues 350-389 (EKRRKPDQTLDEDDPGAAPLKGSGTHMNDKDKNVRQRNAT) are cytoplasmic. Residues 356–389 (DQTLDEDDPGAAPLKGSGTHMNDKDKNVRQRNAT) are disordered. Thr-358 is subject to Phosphothreonine. Ser-372 carries the phosphoserine modification.

As to quaternary structure, interacts with NXNL1. Interacts with SLC2A1 and SLC16A1/GLUT1. Interacts with XKR8; promoting its localization at the cell membrane. In terms of assembly, interacts with ATP1B2, MAG and L1CAM. Interacts with SLC16A7. Interacts with VEGFA, KDR/VEGFR2, PPIA/CYPA, SLC1A3, SLC16A11 and SLC16A12. Interacts with PPIL2; regulates BSG transport to the cell membrane. Interacts with SLC16A1; interaction mediates SLC16A1 targeting to the plasma membrane. Interacts with SLC16A3; interaction mediates SLC16A3 targeting to the plasma membrane. Interacts with SLC16A6; this interaction mediates targeting to the plasma membrane. In terms of processing, N-glycosylated. N-glycosylated. During spermatogenesis, probably deglycosylated during epididymal transit. As to expression, retina-specific. Expressed in both rods and cones (at protein level). In terms of tissue distribution, testis and caput, corpus and cauda epididymides (at protein level). Expressed in the brain, lung, liver, kidney, heart, spleen, uterus, retina and skeletal muscle.

It localises to the cell membrane. The protein resides in the photoreceptor inner segment. Its subcellular location is the cell projection. The protein localises to the cilium. It is found in the photoreceptor outer segment. It localises to the endoplasmic reticulum membrane. The protein resides in the basolateral cell membrane. Its function is as follows. Essential for normal retinal maturation and development. Acts as a retinal cell surface receptor for NXNL1 and plays an important role in NXNL1-mediated survival of retinal cone photoreceptors. In association with glucose transporter SLC16A1/GLUT1 and NXNL1, promotes retinal cone survival by enhancing aerobic glycolysis and accelerating the entry of glucose into photoreceptors. In terms of biological role, signaling receptor for cyclophilins, essential for PPIA/CYPA and PPIB/CYPB-dependent signaling related to chemotaxis and adhesion of immune cells. Plays an important role in targeting the monocarboxylate transporters SLC16A1, SLC16A3 and SLC16A8 to the plasma membrane. Acts as a coreceptor for vascular endothelial growth factor receptor 2 (KDR/VEGFR2) in endothelial cells enhancing its VEGFA-mediated activation and downstream signaling. Promotes angiogenesis through EPAS1/HIF2A-mediated up-regulation of VEGFA and KDR/VEGFR2 in endothelial cells. Plays an important role in spermatogenesis; mediates interactions between germ cells and Sertoli cell and is essential for the development/differentiation of germ cells to round spermatids. The chain is Basigin (Bsg) from Mus musculus (Mouse).